A 311-amino-acid polypeptide reads, in one-letter code: Trem-like transcript 1 protein (311 aa).

Residues 1-15 (MGLTLLLLLLLGLEG) form the signal peptide. The 106-residue stretch at 16-121 (QGIVGSLPEV…PQILHRVSLN (106 aa)) folds into the Ig-like V-type domain. The Extracellular portion of the chain corresponds to 16–162 (QGIVGSLPEV…EPSQDEKSIP (147 aa)). Intrachain disulfides connect Cys-38-Cys-104 and Cys-52-Cys-59. A helical transmembrane segment spans residues 163–183 (LIWGAVLLVGLLVAAVVLFAV). Residues 184–311 (MAKRKQGNRL…NPPNNQTPSS (128 aa)) lie on the Cytoplasmic side of the membrane. Cys-196 carries the S-palmitoyl cysteine lipid modification. A disordered region spans residues 229–263 (VPHIRLDSPPSFDNTTYTSLPLDSPSGKPSLPAPS). Residues 239-249 (SFDNTTYTSLP) show a composition bias toward polar residues. The ITIM motif lies at 279–284 (VTYATV). Residues 287–311 (PGGNKGGGTSCGPAQNPPNNQTPSS) are disordered.

As to quaternary structure, when phosphorylated, interacts with PTPN6. When phosphorylated, interacts with PTPN11. In terms of processing, phosphorylated on tyrosine residues. Detected in platelets, monocytic leukemia and in T-cell leukemia.

The protein resides in the cell membrane. Its subcellular location is the cytoplasm. Its function is as follows. Cell surface receptor that may play a role in the innate and adaptive immune response. The chain is Trem-like transcript 1 protein (TREML1) from Homo sapiens (Human).